Here is a 141-residue protein sequence, read N- to C-terminus: Large ribosomal subunit protein uL11 (141 aa).

The protein belongs to the universal ribosomal protein uL11 family. In terms of assembly, part of the ribosomal stalk of the 50S ribosomal subunit. Interacts with L10 and the large rRNA to form the base of the stalk. L10 forms an elongated spine to which L12 dimers bind in a sequential fashion forming a multimeric L10(L12)X complex. In terms of processing, one or more lysine residues are methylated.

Functionally, forms part of the ribosomal stalk which helps the ribosome interact with GTP-bound translation factors. This is Large ribosomal subunit protein uL11 from Clostridium perfringens (strain ATCC 13124 / DSM 756 / JCM 1290 / NCIMB 6125 / NCTC 8237 / Type A).